Reading from the N-terminus, the 83-residue chain is Putative membrane protein insertion efficiency factor (83 aa).

Belongs to the UPF0161 family.

It is found in the cell inner membrane. Functionally, could be involved in insertion of integral membrane proteins into the membrane. The polypeptide is Putative membrane protein insertion efficiency factor (Pelagibacter ubique (strain HTCC1062)).